The following is a 544-amino-acid chain: Carboxypeptidase Y homolog A (544 aa).

Positions 1–17 (MKSLALALLVGGAIASG) are cleaved as a signal peptide. Positions 18–124 (PQQQVLREPV…RLDTYDLRVK (107 aa)) are excised as a propeptide. Disulfide bonds link Cys-178–Cys-417, Cys-312–Cys-326, Cys-336–Cys-359, Cys-343–Cys-352, and Cys-381–Cys-387. Asn-209 carries an N-linked (GlcNAc...) asparagine glycan. The active site involves Ser-265. Asp-456 is an active-site residue. The N-linked (GlcNAc...) asparagine glycan is linked to Asn-506. His-517 is a catalytic residue.

The protein belongs to the peptidase S10 family.

It localises to the vacuole. It catalyses the reaction Release of a C-terminal amino acid with broad specificity.. In terms of biological role, vacuolar carboxypeptidase involved in degradation of small peptides. Digests preferentially peptides containing an aliphatic or hydrophobic residue in P1' position, as well as methionine, leucine or phenylalanine in P1 position of ester substrate. This chain is Carboxypeptidase Y homolog A (CPYA), found in Ajellomyces capsulatus (strain G186AR / H82 / ATCC MYA-2454 / RMSCC 2432) (Darling's disease fungus).